Consider the following 122-residue polypeptide: Large ribosomal subunit protein bL12 (122 aa).

It belongs to the bacterial ribosomal protein bL12 family. In terms of assembly, homodimer. Part of the ribosomal stalk of the 50S ribosomal subunit. Forms a multimeric L10(L12)X complex, where L10 forms an elongated spine to which 2 to 4 L12 dimers bind in a sequential fashion. Binds GTP-bound translation factors.

In terms of biological role, forms part of the ribosomal stalk which helps the ribosome interact with GTP-bound translation factors. Is thus essential for accurate translation. This is Large ribosomal subunit protein bL12 from Xylella fastidiosa (strain M23).